A 297-amino-acid polypeptide reads, in one-letter code: Phosphoribosylaminoimidazole-succinocarboxamide synthase (297 aa).

Belongs to the SAICAR synthetase family.

It catalyses the reaction 5-amino-1-(5-phospho-D-ribosyl)imidazole-4-carboxylate + L-aspartate + ATP = (2S)-2-[5-amino-1-(5-phospho-beta-D-ribosyl)imidazole-4-carboxamido]succinate + ADP + phosphate + 2 H(+). The protein operates within purine metabolism; IMP biosynthesis via de novo pathway; 5-amino-1-(5-phospho-D-ribosyl)imidazole-4-carboxamide from 5-amino-1-(5-phospho-D-ribosyl)imidazole-4-carboxylate: step 1/2. This chain is Phosphoribosylaminoimidazole-succinocarboxamide synthase, found in Corynebacterium diphtheriae (strain ATCC 700971 / NCTC 13129 / Biotype gravis).